The primary structure comprises 282 residues: uncharacterized protein (282 aa).

It belongs to the glycosyltransferase 2 family. WaaE/KdtX subfamily.

This is an uncharacterized protein from Rickettsia conorii (strain ATCC VR-613 / Malish 7).